Reading from the N-terminus, the 185-residue chain is dCTP deaminase (185 aa).

DCTP-binding positions include 107–112 (KSTYAR), 131–133 (TLE), Gln-152, Tyr-166, and Gln-176. The active-site Proton donor/acceptor is the Glu-133.

The protein belongs to the dCTP deaminase family. Homotrimer.

It catalyses the reaction dCTP + H2O + H(+) = dUTP + NH4(+). It functions in the pathway pyrimidine metabolism; dUMP biosynthesis; dUMP from dCTP (dUTP route): step 1/2. Its function is as follows. Catalyzes the deamination of dCTP to dUTP. The protein is dCTP deaminase of Wolbachia sp. subsp. Brugia malayi (strain TRS).